The chain runs to 334 residues: Holliday junction branch migration complex subunit RuvB (334 aa).

Residues 4-184 (ADRLIQPQLQ…FGIPLRLEFY (181 aa)) are large ATPase domain (RuvB-L). ATP is bound by residues Arg-24, Gly-65, Lys-68, Thr-69, Thr-70, 131-133 (EDY), Arg-174, Tyr-184, and Arg-221. Residue Thr-69 participates in Mg(2+) binding. Residues 185–255 (NVKDLSTIVT…VAEQALDLLD (71 aa)) form a small ATPAse domain (RuvB-S) region. The segment at 258-334 (GEGFDYMDRK…YLHFGMIKPE (77 aa)) is head domain (RuvB-H). Positions 294, 313, and 318 each coordinate DNA.

This sequence belongs to the RuvB family. Homohexamer. Forms an RuvA(8)-RuvB(12)-Holliday junction (HJ) complex. HJ DNA is sandwiched between 2 RuvA tetramers; dsDNA enters through RuvA and exits via RuvB. An RuvB hexamer assembles on each DNA strand where it exits the tetramer. Each RuvB hexamer is contacted by two RuvA subunits (via domain III) on 2 adjacent RuvB subunits; this complex drives branch migration. In the full resolvosome a probable DNA-RuvA(4)-RuvB(12)-RuvC(2) complex forms which resolves the HJ.

The protein localises to the cytoplasm. It carries out the reaction ATP + H2O = ADP + phosphate + H(+). The RuvA-RuvB-RuvC complex processes Holliday junction (HJ) DNA during genetic recombination and DNA repair, while the RuvA-RuvB complex plays an important role in the rescue of blocked DNA replication forks via replication fork reversal (RFR). RuvA specifically binds to HJ cruciform DNA, conferring on it an open structure. The RuvB hexamer acts as an ATP-dependent pump, pulling dsDNA into and through the RuvAB complex. RuvB forms 2 homohexamers on either side of HJ DNA bound by 1 or 2 RuvA tetramers; 4 subunits per hexamer contact DNA at a time. Coordinated motions by a converter formed by DNA-disengaged RuvB subunits stimulates ATP hydrolysis and nucleotide exchange. Immobilization of the converter enables RuvB to convert the ATP-contained energy into a lever motion, pulling 2 nucleotides of DNA out of the RuvA tetramer per ATP hydrolyzed, thus driving DNA branch migration. The RuvB motors rotate together with the DNA substrate, which together with the progressing nucleotide cycle form the mechanistic basis for DNA recombination by continuous HJ branch migration. Branch migration allows RuvC to scan DNA until it finds its consensus sequence, where it cleaves and resolves cruciform DNA. This is Holliday junction branch migration complex subunit RuvB from Shewanella sp. (strain ANA-3).